The following is a 344-amino-acid chain: Ion-translocating oxidoreductase complex subunit D (344 aa).

Helical transmembrane passes span 23–43, 44–64, 77–99, and 120–140; these read LVLG…GPGT, LLNL…MLAL, SALV…WLTL, and PFNP…LEMT. Position 172 is an FMN phosphoryl threonine (threonine 172). Transmembrane regions (helical) follow at residues 198–218, 222–242, 252–272, 285–305, and 306–326; these read LGSA…LFLL, LFTW…SLLF, GSPL…FIVT, LVFG…GGYP, and DGMA…DYYT.

Belongs to the NqrB/RnfD family. The complex is composed of six subunits: RnfA, RnfB, RnfC, RnfD, RnfE and RnfG. Requires FMN as cofactor.

It is found in the cell inner membrane. Functionally, part of a membrane-bound complex that couples electron transfer with translocation of ions across the membrane. This Pseudomonas aeruginosa (strain LESB58) protein is Ion-translocating oxidoreductase complex subunit D.